Reading from the N-terminus, the 207-residue chain is dTTP/UTP pyrophosphatase (207 aa).

The active-site Proton acceptor is the Asp80.

The protein belongs to the Maf family. YhdE subfamily. It depends on a divalent metal cation as a cofactor.

Its subcellular location is the cytoplasm. It carries out the reaction dTTP + H2O = dTMP + diphosphate + H(+). It catalyses the reaction UTP + H2O = UMP + diphosphate + H(+). Nucleoside triphosphate pyrophosphatase that hydrolyzes dTTP and UTP. May have a dual role in cell division arrest and in preventing the incorporation of modified nucleotides into cellular nucleic acids. This Agrobacterium fabrum (strain C58 / ATCC 33970) (Agrobacterium tumefaciens (strain C58)) protein is dTTP/UTP pyrophosphatase (maf1).